Consider the following 56-residue polypeptide: MAYKILDTCVSCGACAAECPVDAISQGDTQFVIDADTCIDCGNCANVCPVGAPVQE.

2 4Fe-4S ferredoxin-type domains span residues 2–28 (AYKI…SQGD) and 29–56 (TQFV…PVQE). Positions 9, 12, 15, 19, 38, 41, 44, and 48 each coordinate [4Fe-4S] cluster.

Requires [4Fe-4S] cluster as cofactor.

In terms of biological role, ferredoxins are iron-sulfur proteins that transfer electrons in a wide variety of metabolic reactions. The polypeptide is Ferredoxin (fer) (Clostridium perfringens (strain 13 / Type A)).